Consider the following 89-residue polypeptide: MKCKRLNEVIELLQPAWQKEPDLNLLQFLQKLAKESGFDGELADLTDDILIYHLKMRDSAKDAVIPGLQKDYEEDFKTALLRARGVIKE.

The protein to H.influenzae HI_0845.

The sequence is that of Protein YihD (yihD) from Escherichia coli O157:H7.